Here is a 1397-residue protein sequence, read N- to C-terminus: Centlein (1397 aa).

Disordered regions lie at residues 1–43 (MAAR…GLAG) and 56–76 (LWRG…GAAV). A2 is modified (N-acetylalanine). Residues S5, S9, and S22 each carry the phosphoserine modification. Coiled coils occupy residues 95 to 126 (EEAK…KEFV) and 405 to 481 (VVNL…KLMA). Disordered stretches follow at residues 422–449 (LKEK…SGKA) and 485–521 (CDQD…SEEL). A compositionally biased stretch (basic and acidic residues) spans 485-503 (CDQDFSEKGTEGKHKEPPV). Coiled-coil stretches lie at residues 674–778 (KNEK…KALR), 973–1114 (ISLR…MELL), and 1152–1299 (SESN…LKKM). S1219 is modified (phosphoserine). Position 1334 is a phosphothreonine (T1334).

In terms of assembly, interacts with CEP250 and CEP68. Interacts with NEK2; the interaction leads to phosphorylation of CNTLN. Post-translationally, phosphorylated directly or indirectly by NEK2.

It localises to the cytoplasm. It is found in the cytoskeleton. Its subcellular location is the microtubule organizing center. The protein localises to the centrosome. The protein resides in the centriole. Required for centrosome cohesion and recruitment of CEP68 to centrosomes. The polypeptide is Centlein (Mus musculus (Mouse)).